The primary structure comprises 484 residues: Glutamate--tRNA ligase (484 aa).

The short motif at 11–21 is the 'HIGH' region element; sequence PSPTGLLHIGN. A 'KMSKS' region motif is present at residues 255–259; the sequence is KLSKR. Lysine 258 is an ATP binding site.

This sequence belongs to the class-I aminoacyl-tRNA synthetase family. Glutamate--tRNA ligase type 1 subfamily. In terms of assembly, monomer.

The protein localises to the cytoplasm. The enzyme catalyses tRNA(Glu) + L-glutamate + ATP = L-glutamyl-tRNA(Glu) + AMP + diphosphate. Functionally, catalyzes the attachment of glutamate to tRNA(Glu) in a two-step reaction: glutamate is first activated by ATP to form Glu-AMP and then transferred to the acceptor end of tRNA(Glu). In Streptococcus suis (strain 98HAH33), this protein is Glutamate--tRNA ligase.